A 293-amino-acid chain; its full sequence is Epidermal growth factor-like protein 8 (293 aa).

The first 25 residues, 1–25 (MGSRAELCTLLGGFSFLLLLIPGEG), serve as a signal peptide directing secretion. Residues 34-112 (SQGVCSKQTL…RHPGALTCEA (79 aa)) form the EMI domain. 9 cysteine pairs are disulfide-bonded: Cys38–Cys97, Cys65–Cys71, Cys96–Cys110, Cys114–Cys124, Cys118–Cys130, Cys132–Cys141, Cys148–Cys159, Cys155–Cys168, and Cys170–Cys183. The N-linked (GlcNAc...) asparagine glycan is linked to Asn50. Residues 111-142 (EAICAKPCLNGGVCVRPDQCECAPGWGGKHCH) enclose the EGF-like 1 domain. An EGF-like 2; calcium-binding domain is found at 144–184 (DVDECRTSITLCSHHCFNTAGSFTCGCPHDLVLGVDGRTCM). Positions 195–232 (SILSVAVREAEKDERALKQEIHELRGRLERLEQWAGQA) form a coiled coil.

It localises to the secreted. The sequence is that of Epidermal growth factor-like protein 8 (EGFL8) from Homo sapiens (Human).